The primary structure comprises 512 residues: Cytochrome P450 1A2 (512 aa).

Residue serine 65 is glycosylated (O-linked (GlcNAc) serine). Phenylalanine 222 is a binding site for substrate. Heme is bound at residue cysteine 454.

Belongs to the cytochrome P450 family. As to quaternary structure, interacts with PGRMC1; the interaction requires PGRMC1 homodimerization. The cofactor is heme. Constitutively expressed in liver.

It is found in the endoplasmic reticulum membrane. Its subcellular location is the microsome membrane. The enzyme catalyses an organic molecule + reduced [NADPH--hemoprotein reductase] + O2 = an alcohol + oxidized [NADPH--hemoprotein reductase] + H2O + H(+). It catalyses the reaction 17beta-estradiol + reduced [NADPH--hemoprotein reductase] + O2 = 2-hydroxy-17beta-estradiol + oxidized [NADPH--hemoprotein reductase] + H2O + H(+). The catalysed reaction is 17beta-estradiol + reduced [NADPH--hemoprotein reductase] + O2 = 4-hydroxy-17beta-estradiol + oxidized [NADPH--hemoprotein reductase] + H2O + H(+). It carries out the reaction estrone + reduced [NADPH--hemoprotein reductase] + O2 = 2-hydroxyestrone + oxidized [NADPH--hemoprotein reductase] + H2O + H(+). The enzyme catalyses estrone + reduced [NADPH--hemoprotein reductase] + O2 = 4-hydroxyestrone + oxidized [NADPH--hemoprotein reductase] + H2O + H(+). It catalyses the reaction cholesterol + reduced [NADPH--hemoprotein reductase] + O2 = 25-hydroxycholesterol + oxidized [NADPH--hemoprotein reductase] + H2O + H(+). The catalysed reaction is all-trans-retinol + reduced [NADPH--hemoprotein reductase] + O2 = all-trans-retinal + oxidized [NADPH--hemoprotein reductase] + 2 H2O + H(+). It carries out the reaction all-trans-retinal + reduced [NADPH--hemoprotein reductase] + O2 = all-trans-retinoate + oxidized [NADPH--hemoprotein reductase] + H2O + 2 H(+). The enzyme catalyses (5Z,8Z,11Z,14Z)-eicosatetraenoate + reduced [NADPH--hemoprotein reductase] + O2 = (14R,15S)-epoxy-(5Z,8Z,11Z)-eicosatrienoate + oxidized [NADPH--hemoprotein reductase] + H2O + H(+). It catalyses the reaction (5Z,8Z,11Z,14Z)-eicosatetraenoate + reduced [NADPH--hemoprotein reductase] + O2 = (14S,15R)-epoxy-(5Z,8Z,11Z)-eicosatrienoate + oxidized [NADPH--hemoprotein reductase] + H2O + H(+). The catalysed reaction is (5Z,8Z,11Z,14Z,17Z)-eicosapentaenoate + reduced [NADPH--hemoprotein reductase] + O2 = (17R,18S)-epoxy-(5Z,8Z,11Z,14Z)-eicosatetraenoate + oxidized [NADPH--hemoprotein reductase] + H2O + H(+). It carries out the reaction (4Z,7Z,10Z,13Z,16Z,19Z)-docosahexaenoate + reduced [NADPH--hemoprotein reductase] + O2 = (19R,20S)-epoxy-(4Z,7Z,10Z,13Z,16Z)-docosapentaenoate + oxidized [NADPH--hemoprotein reductase] + H2O + H(+). The enzyme catalyses (5S)-hydroperoxy-(6E,8Z,11Z,14Z)-eicosatetraenoate = 5-oxo-(6E,8Z,11Z,14Z)-eicosatetraenoate + H2O. It catalyses the reaction (12S)-hydroperoxy-(5Z,8Z,10E,14Z)-eicosatetraenoate = 12-oxo-(5Z,8Z,10E,14Z)-eicosatetraenoate + H2O. The catalysed reaction is (15S)-hydroperoxy-(5Z,8Z,11Z,13E)-eicosatetraenoate = 15-oxo-(5Z,8Z,11Z,13E)-eicosatetraenoate + H2O. It carries out the reaction (13S)-hydroperoxy-(9Z,11E)-octadecadienoate = 13-oxo-(9Z,11E)-octadecadienoate + H2O. The enzyme catalyses (5Z,8Z,11Z,14Z)-eicosatetraenoate + reduced [NADPH--hemoprotein reductase] + O2 = 13-hydroxy-(5Z,8Z,11Z,14Z)-eicosatetraenoate + oxidized [NADPH--hemoprotein reductase] + H2O + H(+). It catalyses the reaction (5Z,8Z,11Z,14Z)-eicosatetraenoate + reduced [NADPH--hemoprotein reductase] + O2 = 19-hydroxy-(5Z,8Z,11Z,14Z)-eicosatetraenoate + oxidized [NADPH--hemoprotein reductase] + H2O + H(+). The catalysed reaction is (9Z,12Z)-octadecadienoate + reduced [NADPH--hemoprotein reductase] + O2 = 11-hydroxy-(9Z,12Z)-octadecadienoate + oxidized [NADPH--hemoprotein reductase] + H2O + H(+). The protein operates within cofactor metabolism; retinol metabolism. Its pathway is steroid metabolism; cholesterol metabolism. It functions in the pathway lipid metabolism; arachidonate metabolism. Functionally, a cytochrome P450 monooxygenase involved in the metabolism of various endogenous substrates, including fatty acids, steroid hormones and vitamins. Mechanistically, uses molecular oxygen inserting one oxygen atom into a substrate, and reducing the second into a water molecule, with two electrons provided by NADPH via cytochrome P450 reductase (NADPH--hemoprotein reductase). Catalyzes the hydroxylation of carbon-hydrogen bonds. Exhibits high catalytic activity for the formation of hydroxyestrogens from estrone (E1) and 17beta-estradiol (E2), namely 2-hydroxy E1 and E2. Metabolizes cholesterol toward 25-hydroxycholesterol, a physiological regulator of cellular cholesterol homeostasis. May act as a major enzyme for all-trans retinoic acid biosynthesis in the liver. Catalyzes two successive oxidative transformation of all-trans retinol to all-trans retinal and then to the active form all-trans retinoic acid. Primarily catalyzes stereoselective epoxidation of the last double bond of polyunsaturated fatty acids (PUFA), displaying a strong preference for the (R,S) stereoisomer. Catalyzes bisallylic hydroxylation and omega-1 hydroxylation of PUFA. May also participate in eicosanoids metabolism by converting hydroperoxide species into oxo metabolites (lipoxygenase-like reaction, NADPH-independent). Plays a role in the oxidative metabolism of xenobiotics. Catalyzes the N-hydroxylation of heterocyclic amines and the O-deethylation of phenacetin. Metabolizes caffeine via N3-demethylation. The chain is Cytochrome P450 1A2 (CYP1A2) from Canis lupus familiaris (Dog).